A 37-amino-acid chain; its full sequence is MKVRASVKPICKDCKIIKRHQIVRVICKTQKHKQRQG.

This sequence belongs to the bacterial ribosomal protein bL36 family.

This chain is Large ribosomal subunit protein bL36, found in Mycoplasma pneumoniae (strain ATCC 29342 / M129 / Subtype 1) (Mycoplasmoides pneumoniae).